A 269-amino-acid chain; its full sequence is 2-dehydro-3-deoxyphosphooctonate aldolase (269 aa).

Belongs to the KdsA family.

The protein resides in the cytoplasm. The catalysed reaction is D-arabinose 5-phosphate + phosphoenolpyruvate + H2O = 3-deoxy-alpha-D-manno-2-octulosonate-8-phosphate + phosphate. The protein operates within carbohydrate biosynthesis; 3-deoxy-D-manno-octulosonate biosynthesis; 3-deoxy-D-manno-octulosonate from D-ribulose 5-phosphate: step 2/3. It functions in the pathway bacterial outer membrane biogenesis; lipopolysaccharide biosynthesis. This chain is 2-dehydro-3-deoxyphosphooctonate aldolase, found in Chlamydia abortus (strain DSM 27085 / S26/3) (Chlamydophila abortus).